The sequence spans 147 residues: Deoxyuridine 5'-triphosphate nucleotidohydrolase (147 aa).

Residues 67-69, asparagine 80, and 84-86 each bind substrate; these read RSG and LID.

The protein belongs to the dUTPase family. Requires Mg(2+) as cofactor.

The enzyme catalyses dUTP + H2O = dUMP + diphosphate + H(+). The protein operates within pyrimidine metabolism; dUMP biosynthesis; dUMP from dCTP (dUTP route): step 2/2. Functionally, this enzyme is involved in nucleotide metabolism: it produces dUMP, the immediate precursor of thymidine nucleotides and it decreases the intracellular concentration of dUTP so that uracil cannot be incorporated into DNA. This is Deoxyuridine 5'-triphosphate nucleotidohydrolase from Gloeobacter violaceus (strain ATCC 29082 / PCC 7421).